The sequence spans 300 residues: UDP-3-O-acyl-N-acetylglucosamine deacetylase (300 aa).

The Zn(2+) site is built by histidine 78, histidine 237, and aspartate 241. Histidine 264 serves as the catalytic Proton donor.

The protein belongs to the LpxC family. Zn(2+) is required as a cofactor.

It carries out the reaction a UDP-3-O-[(3R)-3-hydroxyacyl]-N-acetyl-alpha-D-glucosamine + H2O = a UDP-3-O-[(3R)-3-hydroxyacyl]-alpha-D-glucosamine + acetate. Its pathway is glycolipid biosynthesis; lipid IV(A) biosynthesis; lipid IV(A) from (3R)-3-hydroxytetradecanoyl-[acyl-carrier-protein] and UDP-N-acetyl-alpha-D-glucosamine: step 2/6. In terms of biological role, catalyzes the hydrolysis of UDP-3-O-myristoyl-N-acetylglucosamine to form UDP-3-O-myristoylglucosamine and acetate, the committed step in lipid A biosynthesis. This chain is UDP-3-O-acyl-N-acetylglucosamine deacetylase, found in Acinetobacter baumannii (strain AB307-0294).